We begin with the raw amino-acid sequence, 192 residues long: Orotate phosphoribosyltransferase 2 (192 aa).

116–124 (EDIVTTGLS) lines the 5-phospho-alpha-D-ribose 1-diphosphate pocket. 2 residues coordinate orotate: threonine 120 and arginine 148.

Belongs to the purine/pyrimidine phosphoribosyltransferase family. PyrE subfamily. Homodimer. Requires Mg(2+) as cofactor.

It carries out the reaction orotidine 5'-phosphate + diphosphate = orotate + 5-phospho-alpha-D-ribose 1-diphosphate. Its pathway is pyrimidine metabolism; UMP biosynthesis via de novo pathway; UMP from orotate: step 1/2. Functionally, catalyzes the transfer of a ribosyl phosphate group from 5-phosphoribose 1-diphosphate to orotate, leading to the formation of orotidine monophosphate (OMP). The sequence is that of Orotate phosphoribosyltransferase 2 from Mesorhizobium japonicum (strain LMG 29417 / CECT 9101 / MAFF 303099) (Mesorhizobium loti (strain MAFF 303099)).